The sequence spans 210 residues: Homeobox protein Rhox5 (210 aa).

The interval 1 to 119 is disordered; it reads MEAEGSSRKV…GNPGGRQMPL (119 aa). Positions 17-30 are enriched in basic and acidic residues; sequence GVKEDSEEQHDVKA. A compositionally biased stretch (gly residues) spans 47 to 79; the sequence is GQPGVGAVGTEGEGEELNGGKGHFGPGAPGPMG. Positions 117–175 form a DNA-binding region, homeobox; atypical; it reads MPLQGSRFAQHRLRELESILQRTNSFDVPREDLDRLMDACVSRVQNWFKIRRAAARRTR.

It localises to the nucleus. Functionally, transcription factor required for differentiation of embryonic stem cells (ESCs) into primordial germ cells. This Mus musculus (Mouse) protein is Homeobox protein Rhox5 (Rhox5).